Consider the following 217-residue polypeptide: Vesicle transport through interaction with t-SNAREs homolog 1A (217 aa).

Over 1–192 (MSSDFEGYEQ…GMLRRIIQNR (192 aa)) the chain is Cytoplasmic. Coiled-coil stretches lie at residues 31–92 (PDEK…KRSR) and 112–178 (ENQR…GKSS). The chain crosses the membrane as a helical; Anchor for type IV membrane protein span at residues 193–213 (ILLVILGIIVVIAILTAIAFF). The Vesicular portion of the chain corresponds to 214–217 (VKGH).

It belongs to the VTI1 family. As to quaternary structure, interacts with distinct SNARE complexes that contain either STX5 or STX6. Interacts with NAPA and, to a lesser extent, with NAPG. Identified in a complex containing STX6, STX12, VAMP4 and VTI1A. As to expression, widely expressed.

Its subcellular location is the golgi apparatus membrane. V-SNARE that mediates vesicle transport pathways through interactions with t-SNAREs on the target membrane. These interactions are proposed to mediate aspects of the specificity of vesicle trafficking and to promote fusion of the lipid bilayers. Involved in vesicular transport from the late endosomes to the trans-Golgi network. Along with VAMP7, involved in an non-conventional RAB1-dependent traffic route to the cell surface used by KCNIP1 and KCND2. May be concerned with increased secretion of cytokines associated with cellular senescence. This chain is Vesicle transport through interaction with t-SNAREs homolog 1A (Vti1a), found in Mus musculus (Mouse).